A 503-amino-acid chain; its full sequence is ATP synthase subunit beta (503 aa).

157–164 (GGAGVGKT) contributes to the ATP binding site.

The protein belongs to the ATPase alpha/beta chains family. F-type ATPases have 2 components, CF(1) - the catalytic core - and CF(0) - the membrane proton channel. CF(1) has five subunits: alpha(3), beta(3), gamma(1), delta(1), epsilon(1). CF(0) has three main subunits: a(1), b(2) and c(9-12). The alpha and beta chains form an alternating ring which encloses part of the gamma chain. CF(1) is attached to CF(0) by a central stalk formed by the gamma and epsilon chains, while a peripheral stalk is formed by the delta and b chains.

It localises to the cell inner membrane. It catalyses the reaction ATP + H2O + 4 H(+)(in) = ADP + phosphate + 5 H(+)(out). Its function is as follows. Produces ATP from ADP in the presence of a proton gradient across the membrane. The catalytic sites are hosted primarily by the beta subunits. This is ATP synthase subunit beta from Flavobacterium psychrophilum (strain ATCC 49511 / DSM 21280 / CIP 103535 / JIP02/86).